A 402-amino-acid chain; its full sequence is Triose phosphate/phosphate translocator, chloroplastic (402 aa).

Residues 1-72 (MESRVLSRAT…KGASLLRPCP (72 aa)) constitute a chloroplast transit peptide. Over 73-96 (ATAGGNDSAGEEKVAPVGFFSRYP) the chain is Chloroplast intermembrane. A helical transmembrane segment spans residues 97-117 (ALTTGFFFFTWYFLNVIFNIL). The Lumenal segment spans residues 118 to 129 (NKKIYNYFPYPY). A helical transmembrane segment spans residues 130-150 (FVSVIHLAVGVVYCLVSWTVG). The Chloroplast intermembrane segment spans residues 151–207 (LPKRAPIDGNLLKLLIPVAVCHALGHVTSNVSFAAVAVSFTHTVKALEPFFNAAASQ). A helical membrane pass occupies residues 208–228 (FILGQSIPITLWLSLAPVVIG). Residues 229-272 (VSMASLTELSFNWLGFISAMISNISFTYRSIYSKKAMTDMDSTN) are Lumenal-facing. The helical transmembrane segment at 273–292 (IYAYISIIALIVCIPPALII) threads the bilayer. Over 293–370 (EGPTLLKTGF…IIFGNKISTQ (78 aa)) the chain is Chloroplast intermembrane. Residues 371-391 (TGIGTGIAIAGVALYSFIKAQ) traverse the membrane as a helical segment. Residues 392–402 (IEEEKRQAKAA) are Lumenal-facing.

The protein belongs to the TPT transporter family. TPT (TC 2.A.7.9) subfamily. Homodimer.

It localises to the plastid. Its subcellular location is the chloroplast membrane. Its function is as follows. Mediates the export of fixed carbons from the chloroplasts into the cytosol in the form of triose phosphates. In Pisum sativum (Garden pea), this protein is Triose phosphate/phosphate translocator, chloroplastic.